We begin with the raw amino-acid sequence, 254 residues long: MASLLKVDQEVKLKVDSFRERITSEAEDLVANFFPKKLLELDSFLKEPILNIHDLTQIHSDMNLPVPDPILLTNSHDGLDGPTYKKRRLDDCEEAFQGTKVFVMPNGMLKSNQQLVDIIEKVKPEIRLLIEKCNTVKMWVQLLIPRIEDGNNFGVSIQEETVAELRTVESEAASYLDQISRYYITRAKLVSKIAKYPHVEDYRRTVTEIDEKEYISLRLIISELRNQYVTLHDMILKNIEKIKRPRSSNAETLY.

Ala-2 carries the N-acetylalanine modification. A phosphoserine mark is found at Ser-17 and Ser-24. N6-acetyllysine; by P300/CBP is present on Lys-195. Ser-247 is modified (phosphoserine; by CHEK2).

This sequence belongs to the PA28 family. In terms of assembly, homoheptamer; the stability of the heptamer is essential for the specific activation of the trypsine-like subunit and inhibition of the chymotrypsin-like and postglutamyl-preferring (PGPH) subunits of the proteasome. Interacts with p53/TP53, MDM2 and MAP3K3. Associates with the proteasome. Interacts with CCAR2. Interacts with PSME3IP1 (via C-terminus); the interaction is direct and promotes the association of PSME3 with the 20S proteasome. Interacts with COIL; the interaction is inhibited by PSME3IP1. In terms of processing, phosphorylated by MAP3K3. Phosphorylation at Ser-247 promotes its association with CCAR2. Acetylation at the major site Lys-195 is important for oligomerization and ability to degrade its target substrates. Deacetylated by SIRT1.

The protein localises to the nucleus. It is found in the cytoplasm. Functionally, subunit of the 11S REG-gamma (also called PA28-gamma) proteasome regulator, a doughnut-shaped homoheptamer which associates with the proteasome. 11S REG-gamma activates the trypsin-like catalytic subunit of the proteasome but inhibits the chymotrypsin-like and postglutamyl-preferring (PGPH) subunits. Facilitates the MDM2-p53/TP53 interaction which promotes ubiquitination- and MDM2-dependent proteasomal degradation of p53/TP53, limiting its accumulation and resulting in inhibited apoptosis after DNA damage. May also be involved in cell cycle regulation. Mediates CCAR2 and CHEK2-dependent SIRT1 inhibition. In Pongo abelii (Sumatran orangutan), this protein is Proteasome activator complex subunit 3 (PSME3).